Consider the following 75-residue polypeptide: UPF0352 protein VIBHAR_03027 (75 aa).

This sequence belongs to the UPF0352 family.

This is UPF0352 protein VIBHAR_03027 from Vibrio campbellii (strain ATCC BAA-1116).